Consider the following 408-residue polypeptide: LL-diaminopimelate aminotransferase (408 aa).

The substrate site is built by Tyr-15 and Gly-42. Pyridoxal 5'-phosphate is bound by residues Tyr-72, 108–109 (SK), Tyr-132, Asn-187, Tyr-218, and 246–248 (SFS). Substrate-binding residues include Lys-109, Tyr-132, and Asn-187. At Lys-249 the chain carries N6-(pyridoxal phosphate)lysine. Pyridoxal 5'-phosphate is bound by residues Arg-257 and Asn-292. The substrate site is built by Asn-292 and Arg-388.

Belongs to the class-I pyridoxal-phosphate-dependent aminotransferase family. LL-diaminopimelate aminotransferase subfamily. Homodimer. The cofactor is pyridoxal 5'-phosphate.

The enzyme catalyses (2S,6S)-2,6-diaminopimelate + 2-oxoglutarate = (S)-2,3,4,5-tetrahydrodipicolinate + L-glutamate + H2O + H(+). Its pathway is amino-acid biosynthesis; L-lysine biosynthesis via DAP pathway; LL-2,6-diaminopimelate from (S)-tetrahydrodipicolinate (aminotransferase route): step 1/1. Involved in the synthesis of meso-diaminopimelate (m-DAP or DL-DAP), required for both lysine and peptidoglycan biosynthesis. Catalyzes the direct conversion of tetrahydrodipicolinate to LL-diaminopimelate. The polypeptide is LL-diaminopimelate aminotransferase (Prochlorococcus marinus (strain SARG / CCMP1375 / SS120)).